We begin with the raw amino-acid sequence, 293 residues long: Epidermal growth factor-like protein 8 (293 aa).

The signal sequence occupies residues 1–28 (MGLWAELCISLRGLSFFLVLMTGEGTRG). Residues 34 to 112 (SLGVCSKQTL…PHPGALTCDA (79 aa)) enclose the EMI domain. 9 cysteine pairs are disulfide-bonded: Cys38/Cys97, Cys65/Cys71, Cys96/Cys110, Cys114/Cys124, Cys118/Cys130, Cys132/Cys141, Cys148/Cys159, Cys155/Cys168, and Cys170/Cys183. An N-linked (GlcNAc...) asparagine glycan is attached at Asn50. Residues 111–142 (DAICSKPCLNGGVCTGPDRCECAPGWGGKHCH) enclose the EGF-like 1 domain. The EGF-like 2; calcium-binding domain maps to 144–184 (DVDECRASLTLCSHGCLNTLGSFLCSCPHPLVLGLDGRTCA). Residues 206-235 (SEEERALRWEVAELRGRLEKLEQWATQAGA) are a coiled coil.

As to expression, ubiquitously expressed in brain, kidney, thymus and lung.

The protein resides in the secreted. This chain is Epidermal growth factor-like protein 8 (Egfl8), found in Mus musculus (Mouse).